Consider the following 466-residue polypeptide: Ribulose bisphosphate carboxylase large chain (466 aa).

Position 4 is an N6,N6,N6-trimethyllysine (lysine 4). Substrate contacts are provided by asparagine 113 and threonine 163. Lysine 165 (proton acceptor) is an active-site residue. Lysine 167 lines the substrate pocket. Mg(2+)-binding residues include lysine 191, aspartate 193, and glutamate 194. At lysine 191 the chain carries N6-carboxylysine. The Proton acceptor role is filled by histidine 284. Arginine 285, histidine 317, and serine 369 together coordinate substrate.

The protein belongs to the RuBisCO large chain family. Type I subfamily. In terms of assembly, heterohexadecamer of 8 large chains and 8 small chains; disulfide-linked. The disulfide link is formed within the large subunit homodimers. The cofactor is Mg(2+). In terms of processing, the disulfide bond which can form in the large chain dimeric partners within the hexadecamer appears to be associated with oxidative stress and protein turnover.

Its subcellular location is the plastid. The protein resides in the chloroplast. The catalysed reaction is 2 (2R)-3-phosphoglycerate + 2 H(+) = D-ribulose 1,5-bisphosphate + CO2 + H2O. It carries out the reaction D-ribulose 1,5-bisphosphate + O2 = 2-phosphoglycolate + (2R)-3-phosphoglycerate + 2 H(+). Functionally, ruBisCO catalyzes two reactions: the carboxylation of D-ribulose 1,5-bisphosphate, the primary event in carbon dioxide fixation, as well as the oxidative fragmentation of the pentose substrate in the photorespiration process. Both reactions occur simultaneously and in competition at the same active site. This is Ribulose bisphosphate carboxylase large chain from Pinguicula caerulea (Blueflower butterwort).